The chain runs to 199 residues: 5'-deoxynucleotidase YfbR (199 aa).

Substrate contacts are provided by residues 18–19 (RW) and His-33. The 113-residue stretch at 30–142 (VSEHSLQVAM…VKQADALCAY (113 aa)) folds into the HD domain. The a divalent metal cation site is built by His-33, His-68, and Asp-69. Substrate contacts are provided by residues Asp-69, 77-80 (DLPT), and Asp-137. Asp-137 contributes to the a divalent metal cation binding site.

Belongs to the 5DNU family. Homodimer. Requires a divalent metal cation as cofactor.

The protein resides in the cytoplasm. It carries out the reaction a 2'-deoxyribonucleoside 5'-phosphate + H2O = a 2'-deoxyribonucleoside + phosphate. Its function is as follows. Catalyzes the strictly specific dephosphorylation of 2'-deoxyribonucleoside 5'-monophosphates. This Shigella dysenteriae serotype 1 (strain Sd197) protein is 5'-deoxynucleotidase YfbR.